Here is a 325-residue protein sequence, read N- to C-terminus: tRNA(Ile)-lysidine synthase (325 aa).

34 to 39 provides a ligand contact to ATP; the sequence is SGGADS.

Belongs to the tRNA(Ile)-lysidine synthase family.

It localises to the cytoplasm. The enzyme catalyses cytidine(34) in tRNA(Ile2) + L-lysine + ATP = lysidine(34) in tRNA(Ile2) + AMP + diphosphate + H(+). In terms of biological role, ligates lysine onto the cytidine present at position 34 of the AUA codon-specific tRNA(Ile) that contains the anticodon CAU, in an ATP-dependent manner. Cytidine is converted to lysidine, thus changing the amino acid specificity of the tRNA from methionine to isoleucine. This Rhodococcus opacus (strain B4) protein is tRNA(Ile)-lysidine synthase.